The chain runs to 328 residues: 2-hydroxyisoflavanone dehydratase (328 aa).

An Involved in the stabilization of the negatively charged intermediate by the formation of the oxyanion hole motif is present at residues 85-87; that stretch reads HGG. Residues T173, D272, and H304 contribute to the active site.

Belongs to the 'GDXG' lipolytic enzyme family.

It carries out the reaction (2R,3S)-2,4',7-trihydroxyisoflavanone = daidzein + H2O + H(+). The catalysed reaction is 2-hydroxy-2,3-dihydrogenistein = genistein + H2O + H(+). It catalyses the reaction a carboxylic ester + H2O = an alcohol + a carboxylate + H(+). The protein operates within secondary metabolite biosynthesis; flavonoid biosynthesis. In terms of biological role, dehydratase that mediates the biosynthesis of isoflavonoids. Can better use 2,7-dihydroxy-4'-methoxyisoflavanone as substrate. Has also a slight carboxylesterase activity toward p-nitrophenyl butyrate. The sequence is that of 2-hydroxyisoflavanone dehydratase (HIDM) from Glycyrrhiza echinata (Licorice).